A 358-amino-acid chain; its full sequence is Stearoyl-CoA desaturase 2 (358 aa).

Residues 1–71 (MPAHILQEIS…EGPPPKLEYV (71 aa)) lie on the Cytoplasmic side of the membrane. Residues 14-43 (SATTTITAPPSGGQQNGGEKFEKNPHHWGA) are disordered. Residues 32–43 (EKFEKNPHHWGA) show a composition bias toward basic and acidic residues. The chain crosses the membrane as a helical span at residues 72–92 (WRNIVLMALLHIGALYGITLV). Substrate is bound at residue asparagine 74. Residues 93-96 (PSCK) lie on the Lumenal side of the membrane. The helical transmembrane segment at 97 to 117 (VYTCLFAYLYYVISALGITAG) threads the bilayer. The Cytoplasmic portion of the chain corresponds to 118–216 (AHRLWSHRTY…EKLVMFQRRY (99 aa)). Residues histidine 119 and histidine 124 each coordinate Fe cation. The short motif at 119 to 124 (HRLWSH) is the Histidine box-1 element. Substrate is bound by residues asparagine 147, arginine 154, and aspartate 155. Fe cation contacts are provided by histidine 156, histidine 159, and histidine 160. Residues 156 to 160 (HRAHH) carry the Histidine box-2 motif. The substrate site is built by arginine 187 and lysine 188. A helical transmembrane segment spans residues 217-236 (YKPGLLLMCFILPTLVPWYC). At 237–240 (WGET) the chain is on the lumenal side. The helical transmembrane segment at 241–262 (FVNSLCVSTFLRYAVVLNATWL) threads the bilayer. Residue tryptophan 261 participates in substrate binding. The Cytoplasmic portion of the chain corresponds to 263 to 358 (VNSAAHLYGY…RTGEESCKSG (96 aa)). Residues histidine 268, histidine 297, histidine 300, and histidine 301 each contribute to the Fe cation site. The short motif at 297–301 (HNYHH) is the Histidine box-3 element.

Belongs to the fatty acid desaturase type 1 family. Fe(2+) is required as a cofactor. As to expression, detected in brain and adipose tissue, and at much lower levels in testis. Detected in liver when rats are kept on a fat-free diet, but not when their food contains unsaturated fatty acids.

The protein resides in the endoplasmic reticulum membrane. The protein localises to the microsome membrane. It catalyses the reaction octadecanoyl-CoA + 2 Fe(II)-[cytochrome b5] + O2 + 2 H(+) = (9Z)-octadecenoyl-CoA + 2 Fe(III)-[cytochrome b5] + 2 H2O. The catalysed reaction is hexadecanoyl-CoA + 2 Fe(II)-[cytochrome b5] + O2 + 2 H(+) = (9Z)-hexadecenoyl-CoA + 2 Fe(III)-[cytochrome b5] + 2 H2O. Stearoyl-CoA desaturase that utilizes O(2) and electrons from reduced cytochrome b5 to introduce the first double bond into saturated fatty acyl-CoA substrates. Catalyzes the insertion of a cis double bond at the delta-9 position into fatty acyl-CoA substrates including palmitoyl-CoA and stearoyl-CoA. Gives rise to a mixture of 16:1 and 18:1 unsaturated fatty acids. Contributes to the biosynthesis of membrane phospholipids, cholesterol esters and triglycerides, especially during embryonic development and in neonates. Important for normal permeability barrier function of the skin in neonates. This Rattus norvegicus (Rat) protein is Stearoyl-CoA desaturase 2 (Scd2).